Reading from the N-terminus, the 37-residue chain is M-oxotoxin-Ot2b (37 aa).

As to expression, expressed by the venom gland.

It localises to the secreted. Functionally, disrupts biological membranes, particularly those rich in phosphocholine. Has antimicrobial activity against Gram-negative bacterium E.coli, Gram-positive bacteria B.subtilis and S.aureus, and hemolytic activity against sheep, pig and guinea pig red blood cells. Has insecticidal activity against S.frugiperda ovarian cells by opening non-selective ion channels. Enhances the insecticidal activity of spider venom neurotoxic peptides. This Oxyopes takobius (Lynx spider) protein is M-oxotoxin-Ot2b.